Consider the following 256-residue polypeptide: Cell division protein ZipA (256 aa).

At 1 to 6 (MQYGRQ) the chain is on the periplasmic side. The chain crosses the membrane as a helical span at residues 7–27 (ILICIGILTVIILLLYGLLNS). The Cytoplasmic portion of the chain corresponds to 28-256 (YWDRTVTFCK…RHVLSANKST (229 aa)).

It belongs to the ZipA family. In terms of assembly, interacts with FtsZ via their C-terminal domains.

It is found in the cell inner membrane. Functionally, essential cell division protein that stabilizes the FtsZ protofilaments by cross-linking them and that serves as a cytoplasmic membrane anchor for the Z ring. Also required for the recruitment to the septal ring of downstream cell division proteins. The chain is Cell division protein ZipA from Baumannia cicadellinicola subsp. Homalodisca coagulata.